A 557-amino-acid chain; its full sequence is Myo-inositol transporter 2 (557 aa).

The Cytoplasmic portion of the chain corresponds to 1–76; sequence MDFNNIPLAT…ENGEGFEAEK (76 aa). A disordered region spans residues 24–69; sequence EMTTRPSETKKKVPFSEDMREIPSLPNEEEANATDPQANEVADENG. Residues 30–44 are compositionally biased toward basic and acidic residues; it reads SETKKKVPFSEDMRE. Residues 77 to 97 form a helical membrane-spanning segment; that stretch reads ISSWIWVLSAVAGISGLLFGY. The Extracellular portion of the chain corresponds to 98–99; that stretch reads DT. Residues 100-120 form a helical membrane-spanning segment; that stretch reads GVISGALAVLGSDLGHVLSSG. Residues 121–123 are Cytoplasmic-facing; sequence QKE. Residues 124-144 form a helical membrane-spanning segment; that stretch reads LITSATSFAALISATTSGWLA. Residues 145 to 157 lie on the Extracellular side of the membrane; it reads DWVGRKRLLLCAD. A helical membrane pass occupies residues 158–178; it reads AIFVIGSVIMAASRNVAMMVV. Over 179-180 the chain is Cytoplasmic; the sequence is GR. A helical membrane pass occupies residues 181-201; it reads FIVGYGIGLTSLIVPMYITEL. Residues 202–209 are Extracellular-facing; sequence APARLRGR. Residues 210–230 form a helical membrane-spanning segment; sequence LVIIYVVFITGGQLIAYSLNA. The Cytoplasmic segment spans residues 231–240; the sequence is AFEHVHQGWR. The chain crosses the membrane as a helical span at residues 241-261; it reads IMFGIGAAPALGQLISLFWTP. Over 262–367 the chain is Extracellular; that stretch reads ESPRYLLRHN…IFQSVGFKNS (106 aa). The chain crosses the membrane as a helical span at residues 368 to 388; it reads ISVSIVVGATNFVFTIVAFMF. The Cytoplasmic portion of the chain corresponds to 389–396; it reads IDRIGRRR. Residues 397 to 417 form a helical membrane-spanning segment; sequence ILLCTSAVMIAGLALCAIAYH. Residues 418–432 lie on the Extracellular side of the membrane; it reads FLPADTTQNTNSGWQ. A helical membrane pass occupies residues 433–453; sequence YVVLASIIIFLASYASGIGNI. At 454-468 the chain is on the cytoplasmic side; it reads PWQQAELFPMEVRAL. The chain crosses the membrane as a helical span at residues 469–489; that stretch reads GAGFSTAINWVGNLIISASFL. The Extracellular portion of the chain corresponds to 490–498; the sequence is TMMESITPT. Residues 499–519 traverse the membrane as a helical segment; that stretch reads GTFALFAGFCFVGLVTSYFTY. At 520–557 the chain is on the cytoplasmic side; that stretch reads PELAGMSIENIHKLLEKGFWQAVKESTKRVRKGRIDEA.

The protein belongs to the major facilitator superfamily. Sugar transporter (TC 2.A.1.1) family.

It localises to the membrane. It carries out the reaction myo-inositol(out) + H(+)(out) = myo-inositol(in) + H(+)(in). Functionally, transporter for myo-inositol. In Schizosaccharomyces pombe (strain 972 / ATCC 24843) (Fission yeast), this protein is Myo-inositol transporter 2 (itr2).